A 231-amino-acid polypeptide reads, in one-letter code: Large ribosomal subunit protein uL1 (231 aa).

Belongs to the universal ribosomal protein uL1 family. Part of the 50S ribosomal subunit.

Functionally, binds directly to 23S rRNA. The L1 stalk is quite mobile in the ribosome, and is involved in E site tRNA release. Its function is as follows. Protein L1 is also a translational repressor protein, it controls the translation of the L11 operon by binding to its mRNA. This chain is Large ribosomal subunit protein uL1, found in Lactobacillus delbrueckii subsp. bulgaricus (strain ATCC 11842 / DSM 20081 / BCRC 10696 / JCM 1002 / NBRC 13953 / NCIMB 11778 / NCTC 12712 / WDCM 00102 / Lb 14).